The chain runs to 187 residues: ATP synthase subunit b 2 (187 aa).

Residues S39–P61 form a helical membrane-spanning segment.

Belongs to the ATPase B chain family. As to quaternary structure, F-type ATPases have 2 components, F(1) - the catalytic core - and F(0) - the membrane proton channel. F(1) has five subunits: alpha(3), beta(3), gamma(1), delta(1), epsilon(1). F(0) has three main subunits: a(1), b(2) and c(10-14). The alpha and beta chains form an alternating ring which encloses part of the gamma chain. F(1) is attached to F(0) by a central stalk formed by the gamma and epsilon chains, while a peripheral stalk is formed by the delta and b chains.

The protein resides in the cell inner membrane. In terms of biological role, f(1)F(0) ATP synthase produces ATP from ADP in the presence of a proton or sodium gradient. F-type ATPases consist of two structural domains, F(1) containing the extramembraneous catalytic core and F(0) containing the membrane proton channel, linked together by a central stalk and a peripheral stalk. During catalysis, ATP synthesis in the catalytic domain of F(1) is coupled via a rotary mechanism of the central stalk subunits to proton translocation. Functionally, component of the F(0) channel, it forms part of the peripheral stalk, linking F(1) to F(0). This is ATP synthase subunit b 2 from Parvibaculum lavamentivorans (strain DS-1 / DSM 13023 / NCIMB 13966).